A 185-amino-acid chain; its full sequence is MSEHNPYGTMHATTIITVRKGGKVVMAGDGQVSLGQTVMKGNARKVRRLSKGDVIAGFAGATADAFTLLERLEAKLEQYPDQLMRAAVELAKDWRTNKYLRNLEAMMLVADKSVTLAITGNGDVLEPEHGTIAIGSGGNYAFAAARALMDSDKSAEEIARRALQIAGDICVYTNHNVVMETLDAD.

Thr-13 is a catalytic residue. Na(+) contacts are provided by Gly-167, Cys-170, and Thr-173.

This sequence belongs to the peptidase T1B family. HslV subfamily. A double ring-shaped homohexamer of HslV is capped on each side by a ring-shaped HslU homohexamer. The assembly of the HslU/HslV complex is dependent on binding of ATP.

Its subcellular location is the cytoplasm. It carries out the reaction ATP-dependent cleavage of peptide bonds with broad specificity.. Its activity is regulated as follows. Allosterically activated by HslU binding. Protease subunit of a proteasome-like degradation complex believed to be a general protein degrading machinery. This chain is ATP-dependent protease subunit HslV, found in Sinorhizobium fredii (strain NBRC 101917 / NGR234).